The sequence spans 126 residues: Small ribosomal subunit protein uS12 (126 aa).

Aspartate 89 is subject to 3-methylthioaspartic acid. The segment at 106–126 (GVRERRRSRSKYGAKMPRSAA) is disordered.

This sequence belongs to the universal ribosomal protein uS12 family. Part of the 30S ribosomal subunit. Contacts proteins S8 and S17. May interact with IF1 in the 30S initiation complex.

Functionally, with S4 and S5 plays an important role in translational accuracy. Its function is as follows. Interacts with and stabilizes bases of the 16S rRNA that are involved in tRNA selection in the A site and with the mRNA backbone. Located at the interface of the 30S and 50S subunits, it traverses the body of the 30S subunit contacting proteins on the other side and probably holding the rRNA structure together. The combined cluster of proteins S8, S12 and S17 appears to hold together the shoulder and platform of the 30S subunit. This Tremblaya princeps protein is Small ribosomal subunit protein uS12.